The following is a 224-amino-acid chain: Ribosomal RNA large subunit methyltransferase E (224 aa).

S-adenosyl-L-methionine is bound by residues Gly64, Trp66, Asp97, Asp113, and Asp138. Lys178 functions as the Proton acceptor in the catalytic mechanism.

The protein belongs to the class I-like SAM-binding methyltransferase superfamily. RNA methyltransferase RlmE family.

The protein resides in the cytoplasm. The catalysed reaction is uridine(2552) in 23S rRNA + S-adenosyl-L-methionine = 2'-O-methyluridine(2552) in 23S rRNA + S-adenosyl-L-homocysteine + H(+). Specifically methylates the uridine in position 2552 of 23S rRNA at the 2'-O position of the ribose in the fully assembled 50S ribosomal subunit. The protein is Ribosomal RNA large subunit methyltransferase E of Albidiferax ferrireducens (strain ATCC BAA-621 / DSM 15236 / T118) (Rhodoferax ferrireducens).